A 69-amino-acid chain; its full sequence is Microcin H47 immunity protein MchI (69 aa).

At 1–6 (MSYKKL) the chain is on the cytoplasmic side. The helical transmembrane segment at 7–29 (YQLTAIFSLPLTILLVSLSSLRI) threads the bilayer. Over 30–38 (VGEGNSYVD) the chain is Periplasmic. A helical transmembrane segment spans residues 39–61 (VFLSFIIFLGFIELIHGIRKILV). Residues 62 to 69 (WSGWKNGS) lie on the Cytoplasmic side of the membrane.

It is found in the cell membrane. Functionally, protects a microcin H47-producer cell against microcin H47. This Escherichia coli protein is Microcin H47 immunity protein MchI (mchI).